Consider the following 368-residue polypeptide: uncharacterized protein (368 aa).

This sequence belongs to the CdaR family.

This is an uncharacterized protein from Haemophilus influenzae (strain ATCC 51907 / DSM 11121 / KW20 / Rd).